Reading from the N-terminus, the 2003-residue chain is MRHQVKVCILELREIMREIHNYYYFLDSWTKLNSVGSLIHLFFRQERFFKLFDTRIFSILLSRNLQGSPSNRYFTIKGVILFVAGVLIYRINNQNMVERKSLHLTGLFPIPMNSTEPIKDRLEEAIGSSNINRLSILLLYFPKGKNISERYFLNPKETTGVITITKKGSMPESNWNSGPSFKILVTDFIAYLTSAFREKIPKNPMINLMFPGEMEDFIGNPTRSVRPFCSDRWSELHLWTNPTEKSTIDHKFVKNPLSFVRGAENKEIMNLLRIITYLQKTFSIHSISSDPRWDSVPKHDPDMDSFQKNSLFFLFHRFHERNRFESEERLQEMTELFTLLISEPDLVYHKGFSFSIYIDSYGLEKKKLLNEARAESKNKSLWVLSPILFRYEEIEYFFQRIIQKRVRWISCGNGLADLKQKMVVFASKNIMEAVNQSRLIQNMIQIKSSTDDGYIRNLFNRFFLLKKYDRNFEYRMQGDQKGTPIFNQRTLMKCRIKQDHTYLYKWSDGTQSLQEHLEHFLSEQKSGFKVQKRYFQVMFDQLRICMTKNLIHWFEVRKKVEKKVGKNVYKLVILLLSKSLRFFFLPQSLHFFFIKLLRFVTKFILFLSNSLTIFCVSFGNTPIQRSEIYISELKCSNKKLCNQLFESIGFQIVHLKKLKPLLLEEYDTYNFVINGGTRSPFLSNKIPKRIFDSLSTRTNHSKSFDKKDSCLSKIFHDKDNWLNPPKPFHTSSLISSFYKANKLRFRSHLHHFLFYCNKRFPFSVEKARNTNSHYIYGQFLNILLFRKKRFSLCVGEKKHVFWSRATISPIESQVSNIFIPKDFIQSDDKEYNLDKYFNFLSQPDTVIRRAIYSIVETSGTPLTETQKGDLERTYCQPLSDINLYDSEVNNFPEYLNLNSNMGLAHILFSDKYLSSENHSLCLKKGADVHKGRMSTTFQRDSSFSILSEKWNLFQTYLPSFFTSTGYKYLTLIFGDNFSDLLLILSRRVSIFQEILGLSWRILQIRLSKMPLFIRSEISSQWLHNILLSKEKIRRNTKSSLISTHLRSTKFWEFFYSIIFLLLVAGYLGPIYIFFVSRAFSELQTELKSLKSLRIPSSTIELRKLLDKYPRSEPNSFWLKNIFLVVMEQLRDSLEEIKGFAFGLNRVGPTSGVNSIRFKNKYFNINGIDIIDLIPFAHTRIAFSINTRHISHTSKEIYSLIRKRKNVNGVWIDDKLESWVANSDSIHEEERKFLVQLSALTTEKRILLSLTHSDHFSKNDSGYQMIEQPGAIYLRYLVDIHQKHLMNYEFNTSCLAERRIFLAHSQTITYSQTSYGTNSFHFPSHGKPFSLRLALSPSRGILVIGSIGTGRSYLVKYLATNSYVPFITVFPNKFLDKNPQFIDDIDIDNSNNIDASDDIDMDNSDNIDDDIDRDLATELELLTWMNALTMDREMKAEIARLFITLQFELARAMSPCIIWIPNIHDLDVNESNYLSLGLLVNHLSRDCERCSPINILVIASTHIPQKVDPALIAPKKLNTCIKLRRLLIPQQRKYFFTLSYTRGFHLENKMFHTNGFGSITMGPNARDIVALTNEVLSISITQKKSIIDTNTIRSALHRQTWDLQSQVRLVQDHEILFYQIGRAVAQNVLISNLSNCPIDPISIYLKNKSCNEGDSYLYKWYFELGTSMKKLTILLYLLSCTAGSVAQDLWSLPGPDEKNGITSYGLVENDSDLVHGLLEVEGALVGSSRTEKNCSKFENDRVTLLLRPEPRNPLERMQNGSCSILDQRFLSEKYESEFEEGALAPQQIEEDLFNHIVWAPTIWRPWGFLCIERPNELGFSYWSRSFRGKRILYDEEDELEENDSEFLQSGTMQYKTRDRSSKEKGLFRISQFIWDPADPLFFLFKDRPPGSVFSRLELFADEEMSKGLLTSQTSQIEHLFRYKYTRWFINKTQEKHFEFLIHRQRCLRTNSSLSNRSFRSNTLSESYQYLSNLFLSNGTLLDQMTKTLLRKRWLFPDEMKIGFM.

1344–1351 contacts ATP; that stretch reads GSIGTGRS.

This sequence belongs to the Ycf2 family.

The protein resides in the plastid stroma. Its function is as follows. Probable ATPase of unknown function. Its presence in a non-photosynthetic plant (Epifagus virginiana) and experiments in tobacco indicate that it has an essential function which is probably not related to photosynthesis. The protein is Protein Ycf2 (ycf2) of Cuscuta reflexa (Southern Asian dodder).